Consider the following 213-residue polypeptide: Octanoyltransferase (213 aa).

Positions 36–211 (TNTPDEIWLV…KFCQQLGFKL (176 aa)) constitute a BPL/LPL catalytic domain. Residues 75 to 82 (RGGQVTYH), 142 to 144 (SLG), and 155 to 157 (GLA) contribute to the substrate site. Catalysis depends on Cys173, which acts as the Acyl-thioester intermediate.

The protein belongs to the LipB family.

The protein localises to the cytoplasm. It carries out the reaction octanoyl-[ACP] + L-lysyl-[protein] = N(6)-octanoyl-L-lysyl-[protein] + holo-[ACP] + H(+). It participates in protein modification; protein lipoylation via endogenous pathway; protein N(6)-(lipoyl)lysine from octanoyl-[acyl-carrier-protein]: step 1/2. In terms of biological role, catalyzes the transfer of endogenously produced octanoic acid from octanoyl-acyl-carrier-protein onto the lipoyl domains of lipoate-dependent enzymes. Lipoyl-ACP can also act as a substrate although octanoyl-ACP is likely to be the physiological substrate. This chain is Octanoyltransferase, found in Photorhabdus laumondii subsp. laumondii (strain DSM 15139 / CIP 105565 / TT01) (Photorhabdus luminescens subsp. laumondii).